Here is a 322-residue protein sequence, read N- to C-terminus: Phosphatidylserine decarboxylase proenzyme (322 aa).

Catalysis depends on charge relay system; for autoendoproteolytic cleavage activity residues D90, H147, and S254. S254 serves as the catalytic Schiff-base intermediate with substrate; via pyruvic acid; for decarboxylase activity. At S254 the chain carries Pyruvic acid (Ser); by autocatalysis. The interval 293 to 322 is disordered; it reads PDAEPAPLPAEEIEAEHDASPLVDDKKDQV. Residues 308–322 show a composition bias toward basic and acidic residues; it reads EHDASPLVDDKKDQV.

This sequence belongs to the phosphatidylserine decarboxylase family. PSD-B subfamily. Prokaryotic type I sub-subfamily. Heterodimer of a large membrane-associated beta subunit and a small pyruvoyl-containing alpha subunit. Pyruvate serves as cofactor. Post-translationally, is synthesized initially as an inactive proenzyme. Formation of the active enzyme involves a self-maturation process in which the active site pyruvoyl group is generated from an internal serine residue via an autocatalytic post-translational modification. Two non-identical subunits are generated from the proenzyme in this reaction, and the pyruvate is formed at the N-terminus of the alpha chain, which is derived from the carboxyl end of the proenzyme. The autoendoproteolytic cleavage occurs by a canonical serine protease mechanism, in which the side chain hydroxyl group of the serine supplies its oxygen atom to form the C-terminus of the beta chain, while the remainder of the serine residue undergoes an oxidative deamination to produce ammonia and the pyruvoyl prosthetic group on the alpha chain. During this reaction, the Ser that is part of the protease active site of the proenzyme becomes the pyruvoyl prosthetic group, which constitutes an essential element of the active site of the mature decarboxylase.

It is found in the cell membrane. It carries out the reaction a 1,2-diacyl-sn-glycero-3-phospho-L-serine + H(+) = a 1,2-diacyl-sn-glycero-3-phosphoethanolamine + CO2. It functions in the pathway phospholipid metabolism; phosphatidylethanolamine biosynthesis; phosphatidylethanolamine from CDP-diacylglycerol: step 2/2. In terms of biological role, catalyzes the formation of phosphatidylethanolamine (PtdEtn) from phosphatidylserine (PtdSer). The protein is Phosphatidylserine decarboxylase proenzyme of Escherichia coli (strain 55989 / EAEC).